Here is a 358-residue protein sequence, read N- to C-terminus: Magnesium-protoporphyrin IX monomethyl ester [oxidative] cyclase 1 (358 aa).

It belongs to the AcsF family. It depends on Fe cation as a cofactor.

It catalyses the reaction Mg-protoporphyrin IX 13-monomethyl ester + 3 NADPH + 3 O2 + 2 H(+) = 3,8-divinyl protochlorophyllide a + 3 NADP(+) + 5 H2O. It functions in the pathway porphyrin-containing compound metabolism; chlorophyll biosynthesis (light-independent). Functionally, catalyzes the formation of the isocyclic ring in chlorophyll biosynthesis. Mediates the cyclase reaction, which results in the formation of divinylprotochlorophyllide (Pchlide) characteristic of all chlorophylls from magnesium-protoporphyrin IX 13-monomethyl ester (MgPMME). The polypeptide is Magnesium-protoporphyrin IX monomethyl ester [oxidative] cyclase 1 (Synechocystis sp. (strain ATCC 27184 / PCC 6803 / Kazusa)).